The following is a 52-amino-acid chain: Protein PROPEP914 (52 aa).

A disordered region spans residues 25–52; that stretch reads DKPQDDMPQTPNSQVTIVSRDHPRGGNY. Over residues 31–41 the composition is skewed to polar residues; the sequence is MPQTPNSQVTI. The span at 43-52 shows a compositional bias: basic and acidic residues; it reads SRDHPRGGNY.

As to expression, expressed in roots. Barely detected in flowers.

Produces a rapid alkalinization of the cellular media and the induction of defense-related genes, including chitinase 1b, chalcone synthase and CYP93A1. Not active in tobacco or Arabidopsis. The receptor for GmPep914 is probably different from the receptor for GmSubPep. This is Protein PROPEP914 (PROPEP914) from Glycine max (Soybean).